Here is a 1097-residue protein sequence, read N- to C-terminus: uncharacterized protein (1097 aa).

Residues 31 to 1087 (LLNVARQEEE…TALNKLRTRH (1057 aa)) are a coiled coil.

The protein belongs to the TRAFAC class myosin-kinesin ATPase superfamily. Myosin family. As to expression, specifically expressed in muscles of the head including temporalis and tensor veli palatini.

In terms of biological role, has most probably lost the function in masticatory muscles contraction suspected for its homologs in dog (AC F1PT61) and apes. This is an uncharacterized protein from Homo sapiens (Human).